Here is a 217-residue protein sequence, read N- to C-terminus: UPF0502 protein AHA_2872 (217 aa).

Belongs to the UPF0502 family.

The polypeptide is UPF0502 protein AHA_2872 (Aeromonas hydrophila subsp. hydrophila (strain ATCC 7966 / DSM 30187 / BCRC 13018 / CCUG 14551 / JCM 1027 / KCTC 2358 / NCIMB 9240 / NCTC 8049)).